The primary structure comprises 219 residues: tRNA (guanine-N(7)-)-methyltransferase (219 aa).

Residues E46, E71, N100, and D122 each contribute to the S-adenosyl-L-methionine site. The active site involves D122. Residues K126, D158, and 199–202 (TEYE) contribute to the substrate site.

The protein belongs to the class I-like SAM-binding methyltransferase superfamily. TrmB family.

It carries out the reaction guanosine(46) in tRNA + S-adenosyl-L-methionine = N(7)-methylguanosine(46) in tRNA + S-adenosyl-L-homocysteine. It participates in tRNA modification; N(7)-methylguanine-tRNA biosynthesis. Its function is as follows. Catalyzes the formation of N(7)-methylguanine at position 46 (m7G46) in tRNA. The protein is tRNA (guanine-N(7)-)-methyltransferase of Leuconostoc citreum (strain KM20).